Reading from the N-terminus, the 517-residue chain is Variant surface glycoprotein MVAT5 (517 aa).

The signal sequence occupies residues methionine 1–alanine 21. Cystine bridges form between cysteine 417–cysteine 430 and cysteine 426–cysteine 443. N-linked (GlcNAc...) asparagine glycosylation is present at asparagine 435. Over residues glutamine 454 to threonine 470 the composition is skewed to low complexity. A disordered region spans residues glutamine 454–lysine 487. A compositionally biased stretch (basic and acidic residues) spans aspartate 471 to lysine 487. A lipid anchor (GPI-anchor amidated aspartate) is attached at aspartate 495. Positions serine 496 to phenylalanine 517 are cleaved as a propeptide — removed in mature form.

The protein resides in the cell membrane. VSG forms a coat on the surface of the parasite. The trypanosome evades the immune response of the host by expressing a series of antigenically distinct VSGs from an estimated 1000 VSG genes. The sequence is that of Variant surface glycoprotein MVAT5 from Trypanosoma brucei rhodesiense.